The following is a 142-amino-acid chain: ATP synthase epsilon chain (142 aa).

It belongs to the ATPase epsilon chain family. In terms of assembly, F-type ATPases have 2 components, CF(1) - the catalytic core - and CF(0) - the membrane proton channel. CF(1) has five subunits: alpha(3), beta(3), gamma(1), delta(1), epsilon(1). CF(0) has three main subunits: a, b and c.

The protein localises to the cell inner membrane. In terms of biological role, produces ATP from ADP in the presence of a proton gradient across the membrane. This Shewanella baltica (strain OS155 / ATCC BAA-1091) protein is ATP synthase epsilon chain.